Here is a 137-residue protein sequence, read N- to C-terminus: Neutral phospholipase A2 ammodytin I2 (137 aa).

The first 16 residues, 1 to 16 (MRTLWIVAVCLIGVEG), serve as a signal peptide directing secretion. Cystine bridges form between Cys42-Cys131, Cys44-Cys60, Cys59-Cys111, Cys65-Cys137, Cys66-Cys104, Cys73-Cys97, and Cys91-Cys102. Ca(2+) is bound by residues Tyr43, Gly45, and Gly47. His63 is an active-site residue. Asp64 provides a ligand contact to Ca(2+). Residue Asp105 is part of the active site.

This sequence belongs to the phospholipase A2 family. Group II subfamily. D49 sub-subfamily. The cofactor is Ca(2+). As to expression, expressed by the venom gland.

Its subcellular location is the secreted. The catalysed reaction is a 1,2-diacyl-sn-glycero-3-phosphocholine + H2O = a 1-acyl-sn-glycero-3-phosphocholine + a fatty acid + H(+). Functionally, snake venom phospholipase A2 (PLA2) that has enzymatic activity but is non-toxic. Displays low binding affinity and enzymatic activity on phosphatidylserine-containing vesicles and HEK-293 plasma membranes, in contrast to ammodytoxins that have high activity on these phospholipids. PLA2 catalyzes the calcium-dependent hydrolysis of the 2-acyl groups in 3-sn-phosphoglycerides. The sequence is that of Neutral phospholipase A2 ammodytin I2 from Vipera ammodytes ammodytes (Western sand viper).